The primary structure comprises 121 residues: Large ribosomal subunit protein uL14 (121 aa).

The protein belongs to the universal ribosomal protein uL14 family. As to quaternary structure, part of the 50S ribosomal subunit. Forms a cluster with proteins L3 and L19. In the 70S ribosome, L14 and L19 interact and together make contacts with the 16S rRNA in bridges B5 and B8.

In terms of biological role, binds to 23S rRNA. Forms part of two intersubunit bridges in the 70S ribosome. This is Large ribosomal subunit protein uL14 from Prochlorococcus marinus (strain MIT 9515).